Consider the following 257-residue polypeptide: Acetylglutamate kinase (257 aa).

Substrate contacts are provided by residues 43–44, Arg-65, and Asn-157; that span reads GG. Residues 180–185 and 208–210 contribute to the ATP site; these read DVSGIL and IIT.

The protein belongs to the acetylglutamate kinase family. ArgB subfamily. In terms of assembly, homodimer.

The protein resides in the cytoplasm. The enzyme catalyses N-acetyl-L-glutamate + ATP = N-acetyl-L-glutamyl 5-phosphate + ADP. It participates in amino-acid biosynthesis; L-arginine biosynthesis; N(2)-acetyl-L-ornithine from L-glutamate: step 2/4. In terms of biological role, catalyzes the ATP-dependent phosphorylation of N-acetyl-L-glutamate. This is Acetylglutamate kinase from Salmonella paratyphi B (strain ATCC BAA-1250 / SPB7).